A 310-amino-acid chain; its full sequence is Fe-S cluster assembly protein dre2 (310 aa).

Disordered stretches follow at residues 1-30 (MAPS…GKRT) and 165-184 (APAP…DDND). The segment at 24 to 154 (ADSGKRTLLL…KMDVGNGAAV (131 aa)) is N-terminal SAM-like domain. Residues 155-202 (PLRLGRKKKAAPAPAPVVQPPPIISSDDNDLNDDELIDEDTLLSADDL) are linker. Positions 167–177 (APAPVVQPPPI) are enriched in pro residues. The [2Fe-2S] cluster site is built by Cys-212, Cys-223, Cys-226, and Cys-228. Residues 212–228 (CQPKAGKRRRACKDCTC) are fe-S binding site A. Cys-273, Cys-276, Cys-284, and Cys-287 together coordinate [4Fe-4S] cluster. 2 consecutive short sequence motifs (cx2C motif) follow at residues 273–276 (CGNC) and 284–287 (CDGC). The fe-S binding site B stretch occupies residues 273-287 (CGNCALGDAFRCDGC).

It belongs to the anamorsin family. As to quaternary structure, monomer. Interacts with tah18. Interacts with mia40. Requires [2Fe-2S] cluster as cofactor. The cofactor is [4Fe-4S] cluster.

The protein localises to the cytoplasm. It is found in the mitochondrion intermembrane space. Its function is as follows. Component of the cytosolic iron-sulfur (Fe-S) protein assembly (CIA) machinery required for the maturation of extramitochondrial Fe-S proteins. Part of an electron transfer chain functioning in an early step of cytosolic Fe-S biogenesis, facilitating the de novo assembly of a [4Fe-4S] cluster on the scaffold complex cfd1-nbp35. Electrons are transferred to dre2 from NADPH via the FAD- and FMN-containing protein tah18. Tah18-dre2 are also required for the assembly of the diferric tyrosyl radical cofactor of ribonucleotide reductase (RNR), probably by providing electrons for reduction during radical cofactor maturation in the catalytic small subunit rnr2. The sequence is that of Fe-S cluster assembly protein dre2 from Emericella nidulans (strain FGSC A4 / ATCC 38163 / CBS 112.46 / NRRL 194 / M139) (Aspergillus nidulans).